Here is a 221-residue protein sequence, read N- to C-terminus: Urease accessory protein UreG (221 aa).

19–26 (GPVGSGKT) is a binding site for GTP.

It belongs to the SIMIBI class G3E GTPase family. UreG subfamily. Homodimer. UreD, UreF and UreG form a complex that acts as a GTP-hydrolysis-dependent molecular chaperone, activating the urease apoprotein by helping to assemble the nickel containing metallocenter of UreC. The UreE protein probably delivers the nickel.

The protein resides in the cytoplasm. In terms of biological role, facilitates the functional incorporation of the urease nickel metallocenter. This process requires GTP hydrolysis, probably effectuated by UreG. Expression of the urease operon increases the likelihood of bacterial survival by contributing to acid resistance in vitro and in vivo in BALB/c mice. Y.enterocolitica enters the body via an oral path and must survive the acidic stomach before being able to colonize the intestinal mucosa. In Yersinia enterocolitica, this protein is Urease accessory protein UreG.